We begin with the raw amino-acid sequence, 228 residues long: Phosphoribosylformylglycinamidine synthase subunit PurQ (228 aa).

The region spanning 3–226 (FAVIVFPGSN…VKYWRETHVV (224 aa)) is the Glutamine amidotransferase type-1 domain. Cysteine 86 (nucleophile) is an active-site residue. Active-site residues include histidine 195 and glutamate 197.

In terms of assembly, part of the FGAM synthase complex composed of 1 PurL, 1 PurQ and 2 PurS subunits.

The protein resides in the cytoplasm. It catalyses the reaction N(2)-formyl-N(1)-(5-phospho-beta-D-ribosyl)glycinamide + L-glutamine + ATP + H2O = 2-formamido-N(1)-(5-O-phospho-beta-D-ribosyl)acetamidine + L-glutamate + ADP + phosphate + H(+). The enzyme catalyses L-glutamine + H2O = L-glutamate + NH4(+). The protein operates within purine metabolism; IMP biosynthesis via de novo pathway; 5-amino-1-(5-phospho-D-ribosyl)imidazole from N(2)-formyl-N(1)-(5-phospho-D-ribosyl)glycinamide: step 1/2. In terms of biological role, part of the phosphoribosylformylglycinamidine synthase complex involved in the purines biosynthetic pathway. Catalyzes the ATP-dependent conversion of formylglycinamide ribonucleotide (FGAR) and glutamine to yield formylglycinamidine ribonucleotide (FGAM) and glutamate. The FGAM synthase complex is composed of three subunits. PurQ produces an ammonia molecule by converting glutamine to glutamate. PurL transfers the ammonia molecule to FGAR to form FGAM in an ATP-dependent manner. PurS interacts with PurQ and PurL and is thought to assist in the transfer of the ammonia molecule from PurQ to PurL. This Geobacillus sp. (strain WCH70) protein is Phosphoribosylformylglycinamidine synthase subunit PurQ.